The following is a 123-amino-acid chain: Large ribosomal subunit protein uL14 (123 aa).

This sequence belongs to the universal ribosomal protein uL14 family. Part of the 50S ribosomal subunit. Forms a cluster with proteins L3 and L19. In the 70S ribosome, L14 and L19 interact and together make contacts with the 16S rRNA in bridges B5 and B8.

In terms of biological role, binds to 23S rRNA. Forms part of two intersubunit bridges in the 70S ribosome. The protein is Large ribosomal subunit protein uL14 of Pectobacterium atrosepticum (strain SCRI 1043 / ATCC BAA-672) (Erwinia carotovora subsp. atroseptica).